The primary structure comprises 282 residues: Probable endonuclease 4 (282 aa).

The Zn(2+) site is built by His69, His109, Glu144, Asp178, His181, His215, Asp228, His230, and Glu260.

Belongs to the AP endonuclease 2 family. Zn(2+) serves as cofactor.

It catalyses the reaction Endonucleolytic cleavage to 5'-phosphooligonucleotide end-products.. In terms of biological role, endonuclease IV plays a role in DNA repair. It cleaves phosphodiester bonds at apurinic or apyrimidinic (AP) sites, generating a 3'-hydroxyl group and a 5'-terminal sugar phosphate. In Thermosipho africanus (strain TCF52B), this protein is Probable endonuclease 4.